A 354-amino-acid polypeptide reads, in one-letter code: Galactose-1-phosphate uridylyltransferase (354 aa).

The segment at 36–72 is disordered; it reads TVTTSEVRRDPLLGDSAPSRLAPQGRTYHPPADQCPL. Residues Cys-70, Cys-73, and His-114 each coordinate Zn(2+). Asn-154 contributes to the UDP-alpha-D-glucose binding site. His-165 lines the Zn(2+) pocket. His-167 functions as the Tele-UMP-histidine intermediate in the catalytic mechanism. Residues Gln-169 and Gln-332 each contribute to the UDP-alpha-D-glucose site.

The protein belongs to the galactose-1-phosphate uridylyltransferase type 1 family. Zn(2+) is required as a cofactor.

The enzyme catalyses alpha-D-galactose 1-phosphate + UDP-alpha-D-glucose = alpha-D-glucose 1-phosphate + UDP-alpha-D-galactose. It participates in carbohydrate metabolism; galactose metabolism. The chain is Galactose-1-phosphate uridylyltransferase (galT) from Streptomyces lividans.